The primary structure comprises 323 residues: D-alanine--D-alanine ligase (323 aa).

The ATP-grasp domain occupies 120–319 (LSVLKPYGIK…LEDLFTNAIE (200 aa)). 148 to 203 (VKKVGLPCFVKPNKAGSSFGISKVKSEAELPIAIEVAYKEDNEIIIESFLDGTEVS) is a binding site for ATP. Mg(2+) contacts are provided by Glu274, Glu286, and Asn288.

This sequence belongs to the D-alanine--D-alanine ligase family. Mg(2+) serves as cofactor. Requires Mn(2+) as cofactor.

The protein localises to the cytoplasm. It carries out the reaction 2 D-alanine + ATP = D-alanyl-D-alanine + ADP + phosphate + H(+). The protein operates within cell wall biogenesis; peptidoglycan biosynthesis. Its function is as follows. Cell wall formation. The polypeptide is D-alanine--D-alanine ligase (Flavobacterium johnsoniae (strain ATCC 17061 / DSM 2064 / JCM 8514 / BCRC 14874 / CCUG 350202 / NBRC 14942 / NCIMB 11054 / UW101) (Cytophaga johnsonae)).